The chain runs to 687 residues: Phenylalanine aminomutase (L-beta-phenylalanine forming) (687 aa).

The active-site Proton donor/acceptor is Tyr80. The 5-imidazolinone (Ala-Gly) cross-link spans 175–177 (ASG). At Ser176 the chain carries 2,3-didehydroalanine (Ser). (E)-cinnamate contacts are provided by Asn231, Gln319, Arg325, Asn355, Lys427, Glu455, and Asn458.

The protein belongs to the PAL/histidase family. Homodimer. Homotetramer, dimer of dimers. Contains an active site 4-methylidene-imidazol-5-one (MIO), which is formed autocatalytically by cyclization and dehydration of residues Ala-Ser-Gly.

Its subcellular location is the cytoplasm. The catalysed reaction is L-phenylalanine = L-beta-phenylalanine. The enzyme catalyses L-phenylalanine = (E)-cinnamate + NH4(+). It participates in alkaloid biosynthesis; taxol biosynthesis. The protein operates within phenylpropanoid metabolism; trans-cinnamate biosynthesis; trans-cinnamate from L-phenylalanine: step 1/1. In terms of biological role, phenylalanine aminomutase that catalyzes the rearrangement of L-phenylalanine to R-beta-phenylalanine. Catalyzes the first committed step in the biosynthesis of the side chain of the alkaloid taxol (paclitaxel), a widely-used compound with antitumor activity. Also has low phenylalanine ammonia-lyase activity and can catalyze the amination of trans-cinnamate. The polypeptide is Phenylalanine aminomutase (L-beta-phenylalanine forming) (pam) (Taxus chinensis (Chinese yew)).